The following is a 416-amino-acid chain: Tyrosine--tRNA ligase (416 aa).

Tyr-39 serves as a coordination point for L-tyrosine. The short motif at 44–53 is the 'HIGH' region element; it reads CTASSLHVGS. The L-tyrosine site is built by Tyr-176 and Gln-180. Residues 236-240 carry the 'KMSKS' region motif; sequence KMGKT. Lys-239 serves as a coordination point for ATP. Residues 349-415 form the S4 RNA-binding domain; sequence ISLIDLLHDI…GKKRHIKVMV (67 aa).

Belongs to the class-I aminoacyl-tRNA synthetase family. TyrS type 1 subfamily. In terms of assembly, homodimer.

It is found in the cytoplasm. It carries out the reaction tRNA(Tyr) + L-tyrosine + ATP = L-tyrosyl-tRNA(Tyr) + AMP + diphosphate + H(+). Its function is as follows. Catalyzes the attachment of tyrosine to tRNA(Tyr) in a two-step reaction: tyrosine is first activated by ATP to form Tyr-AMP and then transferred to the acceptor end of tRNA(Tyr). The sequence is that of Tyrosine--tRNA ligase from Wolbachia sp. subsp. Brugia malayi (strain TRS).